A 183-amino-acid polypeptide reads, in one-letter code: Peptidyl-tRNA hydrolase (183 aa).

Y14 serves as a coordination point for tRNA. H19 (proton acceptor) is an active-site residue. The tRNA site is built by Y55 and N57.

The protein belongs to the PTH family. Monomer.

It is found in the cytoplasm. It catalyses the reaction an N-acyl-L-alpha-aminoacyl-tRNA + H2O = an N-acyl-L-amino acid + a tRNA + H(+). In terms of biological role, hydrolyzes ribosome-free peptidyl-tRNAs (with 1 or more amino acids incorporated), which drop off the ribosome during protein synthesis, or as a result of ribosome stalling. Functionally, catalyzes the release of premature peptidyl moieties from peptidyl-tRNA molecules trapped in stalled 50S ribosomal subunits, and thus maintains levels of free tRNAs and 50S ribosomes. The polypeptide is Peptidyl-tRNA hydrolase (Thermus thermophilus (strain ATCC BAA-163 / DSM 7039 / HB27)).